Consider the following 335-residue polypeptide: Anthranilate phosphoribosyltransferase (335 aa).

5-phospho-alpha-D-ribose 1-diphosphate-binding positions include Gly79, 82 to 83 (GD), Ser87, 89 to 92 (NIST), 107 to 115 (KHGNRSITS), and Ser119. Gly79 is an anthranilate binding site. Ser91 contributes to the Mg(2+) binding site. Asn110 lines the anthranilate pocket. Arg165 serves as a coordination point for anthranilate. Positions 224 and 225 each coordinate Mg(2+).

Belongs to the anthranilate phosphoribosyltransferase family. In terms of assembly, homodimer. Requires Mg(2+) as cofactor.

It carries out the reaction N-(5-phospho-beta-D-ribosyl)anthranilate + diphosphate = 5-phospho-alpha-D-ribose 1-diphosphate + anthranilate. Its pathway is amino-acid biosynthesis; L-tryptophan biosynthesis; L-tryptophan from chorismate: step 2/5. Catalyzes the transfer of the phosphoribosyl group of 5-phosphorylribose-1-pyrophosphate (PRPP) to anthranilate to yield N-(5'-phosphoribosyl)-anthranilate (PRA). The sequence is that of Anthranilate phosphoribosyltransferase from Lactococcus lactis subsp. cremoris (strain SK11).